A 159-amino-acid polypeptide reads, in one-letter code: FCS-Like Zinc finger 2 (159 aa).

An FLZ-type zinc finger spans residues 75-119 (HFLDSCFLCKKRLGDNRDIFMYRGDTPFCSEECREEQIERDEAKE). Positions 113–122 (ERDEAKEKKQ) are enriched in basic and acidic residues. A disordered region spans residues 113 to 159 (ERDEAKEKKQSLSTSVKAMRRNEKRSSSSSPTRSRNYAFRTGTVAAA).

The protein belongs to the FLZ family. As to quaternary structure, interacts with KIN10 and KIN11 via its FLZ-type zinc finger domain. Interacts with KINB1, KINB2, KINB3 and SNF4 via its N-terminal part. Forms heterodimer with FLZ7, FLZ10, FLZ11, FLZ12, FLZ15, FLZ17 and FLZ18 in vitro.

Its function is as follows. May act as an adapter to facilitate the interaction of SnRK1 complex with effector proteins, conferring tissue- and stimulus-type specific differences in the SnRK1 regulation pathway. The protein is FCS-Like Zinc finger 2 of Arabidopsis thaliana (Mouse-ear cress).